A 211-amino-acid polypeptide reads, in one-letter code: Thymidylate kinase (211 aa).

ATP is bound at residue 12 to 19 (GIDGSGKS).

It belongs to the thymidylate kinase family.

It carries out the reaction dTMP + ATP = dTDP + ADP. Functionally, phosphorylation of dTMP to form dTDP in both de novo and salvage pathways of dTTP synthesis. The sequence is that of Thymidylate kinase from Ruegeria pomeroyi (strain ATCC 700808 / DSM 15171 / DSS-3) (Silicibacter pomeroyi).